Reading from the N-terminus, the 761-residue chain is MGTIKNNFQLLWLILLIVVLVNGKSINKNNNNNKNEIINVTYDGRSLIINGERKLLFSGSIHYPRTSEEMWPIILKQSKDAGIDIIDTYIFWNIHQPNSPSEYYFDGNANITKFLDLCKEFDLYVNLRIGPYVCAEWTYGGFPIWLKEIPNIVYRDYNQQWMNEMSIWMEFVVKYLDNYFAPNGGPIILAQVENEYGWLEQEYGINGTEYAKWSIDFAKSLNIGIPWIMCQQNDIESAINTCNGYYCHDWISSHWEQFPNQPSFWTENWIGWFENWGQAKPKRPVQDILYSNARFIAYGGSLINYYMWFGGTNFGRTSGGPWIITSYDYDAPLDEFGQPNEPKFSLSSKFHQVLHAIESDLLNNQPPKSPTFLSQFIEVHQYGINLSFITNYGTSTTPKIIQWMNQTYTIQPWSVLIIYNNEILFDTSFIPPNTLFNNNTINNFKPINQNIIQSIFQISDFNLNSGGGGGDGDGNSVNSVSPIEQLLITKDTSDYCWYSTNVTTTSLSYNEKGNIFLTITEFYDYVHIFIDNEYQGSAFSPSLCQLQLNPINNSTTFQLQILSMTIGLENYASHMENYTRGILGSILIGSQNLTNNQWLMKSGLIGENIKIFNNDNTINWQTSPSSSSSSLIQKPLTWYKLNISLVGLPIDISSTVYALDMSSMNKGMIWVNGYSIGRYWLIEATQSICNQSAIENYSYIGEYDPSNYRIDCNKPSQSIYSVPIDWLFNNNYNNQYATIIIIEELNGNPNEIQLLSNKIIN.

Positions 1 to 23 (MGTIKNNFQLLWLILLIVVLVNG) are cleaved as a signal peptide. N39 and N110 each carry an N-linked (GlcNAc...) asparagine glycan. E195 functions as the Proton donor in the catalytic mechanism. N-linked (GlcNAc...) asparagine glycosylation is present at N206. E267 serves as the catalytic Nucleophile. N-linked (GlcNAc...) asparagine glycans are attached at residues N385, N405, N438, N501, N552, N553, N577, N592, N642, N690, and N696.

The protein belongs to the glycosyl hydrolase 35 family.

The catalysed reaction is Hydrolysis of terminal non-reducing beta-D-galactose residues in beta-D-galactosides.. Cleaves beta-linked terminal galactosyl residues from gangliosides, glycoproteins, and glycosaminoglycans. This is Probable beta-galactosidase 2 (glb2) from Dictyostelium discoideum (Social amoeba).